The following is a 1216-amino-acid chain: Protein WWC3 (1216 aa).

Residues 1–63 form a disordered region; that stretch reads MPWLSGGRRR…RESAELPLPA (63 aa). Residues 21-51 show a composition bias toward pro residues; that stretch reads EPPPSAQPQREPPPAPPAAVPTPPAPSAPPP. WW domains lie at 59–92 and 106–139; these read LPLP…DPRD and DELP…DPRE. 2 coiled-coil regions span residues 164–250 and 354–468; these read KEIY…TLQE and DRVR…EATR. Disordered regions lie at residues 487 to 508, 546 to 612, and 634 to 668; these read VSSG…SSRG, GRDA…ADSC, and DLPG…VGGT. The span at 570–598 shows a compositional bias: low complexity; sequence PQSLASLSSRSSLSSLSPPSSPLDTPFLP. One can recognise a C2 domain in the interval 722 to 847; it reads SNGDPQIHVG…SLSEMQLRWH (126 aa). Residues 885–936 adopt a coiled-coil conformation; sequence DAVTVLLARTTAQLQAVERELAEERAKLEYTEEEVLEMERKEEQAEAISERS. Residues 1060–1079 form an interaction with PRKCZ region; sequence SPFVRNTLERRTLRYKQSCR. Positions 1091–1160 form a coiled coil; it reads LDLELDLQAS…RQTRQTKLDY (70 aa).

Belongs to the WWC family. As to quaternary structure, forms homodimers and heterodimers with WWC1 and WWC2. Interacts with DLC1 and PRKCZ. Interacts (via WW domains) with LATS1 and LATS2.

It is found in the cytoplasm. The protein localises to the cytosol. Regulator of the Hippo signaling pathway, also known as the Salvador-Warts-Hippo (SWH) pathway. Enhances phosphorylation of LATS1 and YAP1 and negatively regulates cell proliferation and organ growth due to a suppression of the transcriptional activity of YAP1, the major effector of the Hippo pathway. The sequence is that of Protein WWC3 from Homo sapiens (Human).